Reading from the N-terminus, the 524-residue chain is MELGPEPPHRRRLLFACSPPPASQPVVKALFGASAAGGLSPVTNLTVTMDQLQGLGSDYEQPLEVKNNSNLQRMGSSESTDSGFCLDSPGPLDSKENLENPMRRIHSLPQKLLGCSPALKRSHSDSLDHDIFQLIDPDENKENEAFEFKKPVRPVSRGCLHSHGLQEGKDLFTQRQNSAPARMLSSNERDSSEPGNFIPLFTPQSPVTATLSDEDDGFVDLLDGENLKNEEETPSCMASLWTAPLVMRTTNLDNRCKLFDSPSLCSSSTRSVLKRPERSQEESPPGSTKRRKSMSGASPKESTNPEKAHETLHQSLSLASSPKGTIENILDNDPRDLIGDFSKGYLFHTVAGKHQDLKYISPEIMASVLNGKFANLIKEFVIIDCRYPYEYEGGHIKGAVNLHMEEEVEDFLLKKPIVPTDGKRVIVVFHCEFSSERGPRMCRYVRERDRLGNEYPKLHYPELYVLKGGYKEFFMKCQSYCEPPSYRPMHHEDFKEDLKKFRTKSRTWAGEKSKREMYSRLKKL.

Residues 74 to 84 (MGSSESTDSGF) carry the Phosphodegron motif. S76 is subject to Phosphoserine; by CHEK1. 3 positions are modified to phosphoserine; by NEK11: S79, S82, and S88. The residue at position 107 (S107) is a Phosphoserine. At S124 the chain carries Phosphoserine; by CHEK1 and CHEK2. The short motif at 141-143 (KEN) is the KEN box element. S178 carries the phosphoserine; by CHEK1 modification. Residues 264–317 (LCSSSTRSVLKRPERSQEESPPGSTKRRKSMSGASPKESTNPEKAHETLHQSLS) are disordered. A phosphoserine; by CHEK1 and CHEK2 mark is found at S279 and S293. The span at 303–312 (TNPEKAHETL) shows a compositional bias: basic and acidic residues. A Phosphoserine modification is found at S321. In terms of domain architecture, Rhodanese spans 376-482 (LIKEFVIIDC…FFMKCQSYCE (107 aa)). C431 is an active-site residue. Residue T507 is modified to Phosphothreonine; by CHEK1. A phosphoserine; by PLK3 mark is found at S513 and S519.

The protein belongs to the MPI phosphatase family. As to quaternary structure, interacts with CCNB1/cyclin B1. Interacts with YWHAE/14-3-3 epsilon when phosphorylated. Interacts with CUL1 specifically when CUL1 is neddylated and active. Interacts with BTRC/BTRCP1 and FBXW11/BTRCP2. Interactions with CUL1, BTRC and FBXW11 are enhanced upon DNA damage. Interacts with CHEK2; mediates CDC25A phosphorylation and degradation in response to infrared-induced DNA damages. Interacts with HSP90AB1; prevents heat shock-mediated CDC25A degradation and contributes to cell cycle progression. Phosphorylated by CHEK1 on Ser-76, Ser-124, Ser-178, Ser-279, Ser-293 and Thr-507 during checkpoint mediated cell cycle arrest. Also phosphorylated by CHEK2 on Ser-124, Ser-279, and Ser-293 during checkpoint mediated cell cycle arrest. Phosphorylation on Ser-178 and Thr-507 creates binding sites for YWHAE/14-3-3 epsilon which inhibits CDC25A. Phosphorylation on Ser-76, Ser-124, Ser-178, Ser-279 and Ser-293 may also promote ubiquitin-dependent proteolysis of CDC25A by the SCF complex. Phosphorylation of CDC25A at Ser-76 by CHEK1 primes it for subsequent phosphorylation at Ser-79, Ser-82 and Ser-88 by NEK11. Phosphorylation by NEK11 is required for BTRC-mediated polyubiquitination and degradation. Phosphorylation by PIM1 leads to an increase in phosphatase activity. Phosphorylated by PLK3 following DNA damage, leading to promote its ubiquitination and degradation. Post-translationally, ubiquitinated by the anaphase promoting complex/cyclosome (APC/C) ubiquitin ligase complex that contains FZR1/CDH1 during G1 phase leading to its degradation by the proteasome. Ubiquitinated by a SCF complex containing BTRC and FBXW11 during S phase leading to its degradation by the proteasome. Deubiquitination by USP17L2/DUB3 leads to its stabilization.

It carries out the reaction O-phospho-L-tyrosyl-[protein] + H2O = L-tyrosyl-[protein] + phosphate. Stimulated by B-type cyclins. Stimulated by PIM1-mediated phosphorylation. Functionally, tyrosine protein phosphatase which functions as a dosage-dependent inducer of mitotic progression. Directly dephosphorylates CDK1 and stimulates its kinase activity. Also dephosphorylates CDK2 in complex with cyclin-E, in vitro. The protein is M-phase inducer phosphatase 1 (CDC25A) of Homo sapiens (Human).